Consider the following 469-residue polypeptide: UDP-N-acetylmuramate--L-alanine ligase (469 aa).

An ATP-binding site is contributed by 122-128 (GTHGKTT).

The protein belongs to the MurCDEF family.

It localises to the cytoplasm. The catalysed reaction is UDP-N-acetyl-alpha-D-muramate + L-alanine + ATP = UDP-N-acetyl-alpha-D-muramoyl-L-alanine + ADP + phosphate + H(+). The protein operates within cell wall biogenesis; peptidoglycan biosynthesis. Cell wall formation. This Legionella pneumophila (strain Lens) protein is UDP-N-acetylmuramate--L-alanine ligase.